Consider the following 339-residue polypeptide: Deubiquitinase and deneddylase Dub2 (339 aa).

A helical transmembrane segment spans residues 36 to 56; that stretch reads IIIALFLIVISCGLILCAYTF. Residues histidine 203, aspartate 220, and cysteine 282 contribute to the active site.

It belongs to the peptidase C48 family.

It is found in the secreted. Its subcellular location is the host cell. It localises to the membrane. Its function is as follows. Effector proteins function to alter host cell physiology and promote bacterial survival in host tissues. This protease possesses deubiquitinating and deneddylating activities. In Chlamydia trachomatis serovar A (strain ATCC VR-571B / DSM 19440 / HAR-13), this protein is Deubiquitinase and deneddylase Dub2 (cdu2).